A 671-amino-acid polypeptide reads, in one-letter code: UvrABC system protein B (671 aa).

Positions 25 to 412 (EGIDAGLAHQ…AGRIVEQVVR (388 aa)) constitute a Helicase ATP-binding domain. An ATP-binding site is contributed by 38–45 (GVTGSGKT). A Beta-hairpin motif is present at residues 91–114 (YYDYYQPEAYVPSSDTFIEKDASI). In terms of domain architecture, Helicase C-terminal spans 429 to 582 (QVDDLLSEIH…QIAFNLEHGI (154 aa)). The segment at 601–625 (PGSRSKKRKGMAKAAEESARYENEL) is disordered. The span at 614–625 (AAEESARYENEL) shows a compositional bias: basic and acidic residues. One can recognise a UVR domain in the interval 632–667 (NKRIRQLEEKMYQLARDLEFEAAAQMRDEIGKLRER).

It belongs to the UvrB family. Forms a heterotetramer with UvrA during the search for lesions. Interacts with UvrC in an incision complex.

The protein localises to the cytoplasm. Functionally, the UvrABC repair system catalyzes the recognition and processing of DNA lesions. A damage recognition complex composed of 2 UvrA and 2 UvrB subunits scans DNA for abnormalities. Upon binding of the UvrA(2)B(2) complex to a putative damaged site, the DNA wraps around one UvrB monomer. DNA wrap is dependent on ATP binding by UvrB and probably causes local melting of the DNA helix, facilitating insertion of UvrB beta-hairpin between the DNA strands. Then UvrB probes one DNA strand for the presence of a lesion. If a lesion is found the UvrA subunits dissociate and the UvrB-DNA preincision complex is formed. This complex is subsequently bound by UvrC and the second UvrB is released. If no lesion is found, the DNA wraps around the other UvrB subunit that will check the other stand for damage. This is UvrABC system protein B from Pseudomonas syringae pv. tomato (strain ATCC BAA-871 / DC3000).